A 225-amino-acid chain; its full sequence is Orotate phosphoribosyltransferase (225 aa).

Lys29 is a binding site for 5-phospho-alpha-D-ribose 1-diphosphate. 37 to 38 (FF) serves as a coordination point for orotate. Residues 75-76 (YK), Arg101, Lys102, Lys105, His107, and 126-134 (DDVISAGTS) contribute to the 5-phospho-alpha-D-ribose 1-diphosphate site. Orotate contacts are provided by Ser130 and Arg158.

Belongs to the purine/pyrimidine phosphoribosyltransferase family. PyrE subfamily. In terms of assembly, homodimer. Mg(2+) is required as a cofactor.

It catalyses the reaction orotidine 5'-phosphate + diphosphate = orotate + 5-phospho-alpha-D-ribose 1-diphosphate. Its pathway is pyrimidine metabolism; UMP biosynthesis via de novo pathway; UMP from orotate: step 1/2. Catalyzes the transfer of a ribosyl phosphate group from 5-phosphoribose 1-diphosphate to orotate, leading to the formation of orotidine monophosphate (OMP). This is Orotate phosphoribosyltransferase from Ralstonia pickettii (strain 12J).